We begin with the raw amino-acid sequence, 125 residues long: MAESLYAFIDSPGGIAPVQEGTSNRYTFFCPESFHIPPHGVVLLHLKVSVLVPTGYQGRFMALNDYHARDILTQSDVIFAGRRQELTVLLFNHTDRFLYVRKGHPVGTLLLERVIFPSVKIATLV.

The short motif at 122–125 (ATLV) is the PDZ-binding element.

It belongs to the dUTPase family. As to quaternary structure, binds to human MPDZ.

It localises to the host cytoplasm. The catalysed reaction is dUTP + H2O = dUMP + diphosphate + H(+). In terms of biological role, plays a key role in virus oncogenecity in animals. Binds and sequesters human MUPP1/MPDZ protein in the cytoplasm, preventing it from playing a role in cellular proliferation regulation. Induces cell transformation, probably by inactivating MPDZ protein. The protein is E4-ORF1 (E4) of Homo sapiens (Human).